The sequence spans 3080 residues: Protein PIEZO homolog (3080 aa).

6 consecutive transmembrane segments (helical) span residues 28–48, 57–77, 86–106, 113–133, 204–224, and 232–252; these read YIYFIFFLLSILCLPHKSLIL, PIITLVLSMFSLILQLLVNVV, LSVNILTAFGFYKYNSFWIVF, VIVFVISLFTIILWFKNLVYP, YPSIINVIYFVFTILIILLLA, and VMLKCYPILLITSLCHLLFVY. N-linked (GlcNAc...) asparagine glycosylation is present at N276. The helical transmembrane segment at 285–305 threads the bilayer; that stretch reads WPLVIGYITVLLLYISTCILF. N-linked (GlcNAc...) asparagine glycosylation is found at N312 and N339. 2 helical membrane passes run 362–382 and 396–416; these read ILVVCFFLTASVASAILLASG and VIYIILLYFLVFISAQYIFNI. N434 is a glycosylation site (N-linked (GlcNAc...) asparagine). A helical membrane pass occupies residues 438–458; that stretch reads WLYIGVQIVVSLTLSLYCFYS. The segment at 469-548 is disordered; it reads KKDQQSQQSQ…GGGIIRPRKP (80 aa). The span at 473-505 shows a compositional bias: low complexity; that stretch reads QSQQSQPQPQQQQQQQQSSQNNQIQQSPLQYQQ. Over residues 512–532 the composition is skewed to polar residues; that stretch reads ISNKSLPSSPMSTKSTTVHIQ. N-linked (GlcNAc...) asparagine glycans are attached at residues N514, N567, and N606. Transmembrane regions (helical) follow at residues 672 to 692, 700 to 720, and 740 to 760; these read GLTSINLLNAGYMLFFIVFVI, FWMCLIIYAQMVLLTLYIWQL, and YGSPLWVGLIWHIIIITFSII. The N-linked (GlcNAc...) asparagine glycan is linked to N795. A run of 3 helical transmembrane segments spans residues 827-847, 849-869, and 872-892; these read FCYLVIVIVSIFTKISLINIV, MATVFLCLLIHHISANGSIHI, and FWIIIILSQGVVLVARYIMQF. N-linked (GlcNAc...) asparagine glycosylation is present at N918. Residues 928 to 948 form a helical membrane-spanning segment; it reads LFGCSSILVVCVFQLTVFFSI. Residue N992 is glycosylated (N-linked (GlcNAc...) asparagine). 2 consecutive transmembrane segments (helical) span residues 1036 to 1056 and 1067 to 1087; these read FAISIAEYNFFNFIYLIMIVI and IGSFLLFYSQLWVLTQLAALL. An N-linked (GlcNAc...) asparagine glycan is attached at N1109. The segment at 1158–1185 is disordered; it reads QQQRKLEEHEEEYEEEEDQFGNKKNNDK. Residues 1166-1176 are compositionally biased toward acidic residues; sequence HEEEYEEEEDQ. N-linked (GlcNAc...) asparagine glycans are attached at residues N1191, N1240, and N1251. A disordered region spans residues 1199–1253; that stretch reads DDGNNNNNNNNNNNNNNNNNNNNNNNNNNNNNNNNNNNNNNNQSNNENNENNNNS. The segment covering 1202–1252 has biased composition (low complexity); sequence NNNNNNNNNNNNNNNNNNNNNNNNNNNNNNNNNNNNNNNQSNNENNENNNN. The next 3 membrane-spanning stretches (helical) occupy residues 1281 to 1301, 1316 to 1336, and 1360 to 1380; these read VLAFALFWRLNILGMIYLIII, IYVSALLAPTILIQYLLILVV, and LLLLSIPDRYVLVIDFLVLFF. N-linked (GlcNAc...) asparagine glycosylation is found at N1424 and N1440. 2 helical membrane-spanning segments follow: residues 1472-1492 and 1519-1539; these read VILIVIFLAGTAECDILSCFY and IYNWLVLMAQIIFQVAVILYF. Residues N1559 and N1589 are each glycosylated (N-linked (GlcNAc...) asparagine). Residues 1619 to 1639 form a helical membrane-spanning segment; the sequence is IETGPLSISTISDVIIMVLLA. The segment covering 1704 to 1714 has biased composition (basic residues); the sequence is RINRRKNRHNH. A disordered region spans residues 1704-1812; it reads RINRRKNRHN…NPLSNSSSTV (109 aa). The span at 1715 to 1742 shows a compositional bias: low complexity; that stretch reads YYNNNPNNNYNNNNNNNNSNSSNSNNNN. 8 N-linked (GlcNAc...) asparagine glycosylation sites follow: N1731, N1734, N1763, N1768, N1771, N1779, N1807, and N1864. Residues 1762–1782 are compositionally biased toward polar residues; sequence KNTTNQNATNSTYSPFANSTM. Positions 1789–1812 are enriched in low complexity; the sequence is NNNNNNNNNNNFNNNPLSNSSSTV. 2 disordered regions span residues 1873–1899 and 1958–2032; these read LQQEQQQQQEQQQQLNPQQQQSQSSKE and SQLL…TSSS. Residues 1958–2021 show a composition bias toward low complexity; that stretch reads SQLLQQQQQQ…NNNNNNNNNN (64 aa). A glycan (N-linked (GlcNAc...) asparagine) is linked at N2027. 2 helical membrane-spanning segments follow: residues 2078-2098 and 2112-2132; these read IANGVFYNSIISLVYLLAVFL and FWRFMIGYSSLIICLKYVFQI. The N-linked (GlcNAc...) asparagine glycan is linked to N2148. Residues 2199-2219 form a helical membrane-spanning segment; that stretch reads VFGLYIIDGHFISGAFWDLAI. Residues 2277–2367 are disordered; it reads LNNSPISLNS…NNNNNNNNNN (91 aa). N2285 is a glycosylation site (N-linked (GlcNAc...) asparagine). Positions 2288–2367 are enriched in low complexity; it reads NNNNNNNNNN…NNNNNNNNNN (80 aa). 2 helical membrane-spanning segments follow: residues 2427-2447 and 2457-2477; these read IIIYPFKWLFVSIIEYVWLAI and YYMPLLFTDFACLFFLVIFPQ. N-linked (GlcNAc...) asparagine glycosylation is present at N2478. 4 helical membrane passes run 2500-2520, 2530-2550, 2553-2573, and 2671-2691; these read YIVILLAQFGVIILDRIIYLY, QIVLTVLYHVFLFFYFPDLIV, FSFGYTWPLVVFYLMKCIYLY, and FVTGVTFFIGLVILLWFPLII. N-linked (GlcNAc...) asparagine glycans are attached at residues N2762, N2790, N2837, N2840, N2848, N2858, N2908, N2913, and N2935. Residues 2835–2863 are disordered; that stretch reads QSNNSNNSNNPNENSSSGSDDNNNNSNNN. Low complexity predominate over residues 2836 to 2863; the sequence is SNNSNNSNNPNENSSSGSDDNNNNSNNN. The helical transmembrane segment at 2955–2975 threads the bilayer; it reads ITSTLVSAGIIGLYVSVVLSV. Positions 3054-3080 are disordered; the sequence is PTINSTLNNQNNQNNNNNNNNNHEKIN. Residue N3057 is glycosylated (N-linked (GlcNAc...) asparagine). Residues 3061 to 3074 show a composition bias toward low complexity; sequence NNQNNQNNNNNNNN.

Belongs to the PIEZO (TC 1.A.75) family.

It is found in the membrane. The protein is Protein PIEZO homolog of Dictyostelium discoideum (Social amoeba).